A 497-amino-acid chain; its full sequence is Cytochrome P450 26A1 (497 aa).

Position 442 (Cys-442) interacts with heme.

It belongs to the cytochrome P450 family. The cofactor is heme. Expressed in most fetal and adult tissues with highest levels in adult liver, heart, pituitary gland, adrenal gland, placenta and regions of the brain. Expressed at high levels in lung, pancreas, skin and uterus (at protein level). Lower expression level is detected in spleen, kidney, intestine and adipose tissue (at protein level).

It is found in the endoplasmic reticulum membrane. Its subcellular location is the microsome membrane. It catalyses the reaction all-trans-retinoate + reduced [NADPH--hemoprotein reductase] + O2 = all-trans-(4S)-hydroxyretinoate + oxidized [NADPH--hemoprotein reductase] + H2O + H(+). The catalysed reaction is all-trans-(4S)-hydroxyretinoate + reduced [NADPH--hemoprotein reductase] + O2 = all-trans-(4S,16)-dihydroxyretinoate + oxidized [NADPH--hemoprotein reductase] + H2O + H(+). It carries out the reaction all-trans-retinoate + reduced [NADPH--hemoprotein reductase] + O2 = all-trans-18-hydroxyretinoate + oxidized [NADPH--hemoprotein reductase] + H2O + H(+). Functionally, a cytochrome P450 monooxygenase involved in the metabolism of retinoates (RAs), the active metabolites of vitamin A, and critical signaling molecules in animals. RAs exist as at least four different isomers: all-trans-RA (atRA), 9-cis-RA, 13-cis-RA, and 9,13-dicis-RA, where atRA is considered to be the biologically active isomer, although 9-cis-RA and 13-cis-RA also have activity. Catalyzes the hydroxylation of atRA primarily at C-4 and C-18, thereby contributing to the regulation of atRA homeostasis and signaling. Hydroxylation of atRA limits its biological activity and initiates a degradative process leading to its eventual elimination. Involved in the convertion of atRA to all-trans-4-oxo-RA. Able to metabolize other RAs such as 9-cis, 13-cis and 9,13-di-cis RA. Can oxidize all-trans-13,14-dihydroretinoate (DRA) to metabolites which could include all-trans-4-oxo-DRA, all-trans-4-hydroxy-DRA, all-trans-5,8-epoxy-DRA, and all-trans-18-hydroxy-DRA. May play a role in the oxidative metabolism of xenobiotics such as tazarotenic acid. The chain is Cytochrome P450 26A1 from Homo sapiens (Human).